The primary structure comprises 257 residues: Ribonuclease HII (257 aa).

Residues 72–257 (TYIAGIDEVG…FAPIKDMIQK (186 aa)) form the RNase H type-2 domain. Residues aspartate 78, glutamate 79, and aspartate 170 each coordinate a divalent metal cation.

This sequence belongs to the RNase HII family. Mn(2+) serves as cofactor. Mg(2+) is required as a cofactor.

The protein resides in the cytoplasm. It carries out the reaction Endonucleolytic cleavage to 5'-phosphomonoester.. Its function is as follows. Endonuclease that specifically degrades the RNA of RNA-DNA hybrids. This is Ribonuclease HII from Bacillus cereus (strain G9842).